Consider the following 310-residue polypeptide: Cytochrome f (310 aa).

The first 23 residues, 1 to 23 (MRRLIPILLGSLVLSLSILVAPA), serve as a signal peptide directing secretion. The heme site is built by tyrosine 28, cysteine 48, cysteine 51, and histidine 52. The helical transmembrane segment at 277-297 (IYGLLAFFVAVSLAQILLVLK) threads the bilayer.

Belongs to the cytochrome f family. In terms of assembly, the 4 large subunits of the cytochrome b6-f complex are cytochrome b6, subunit IV (17 kDa polypeptide, PetD), cytochrome f and the Rieske protein, while the 4 small subunits are PetG, PetL, PetM and PetN. The complex functions as a dimer. Heme is required as a cofactor.

The protein resides in the cellular thylakoid membrane. Its function is as follows. Component of the cytochrome b6-f complex, which mediates electron transfer between photosystem II (PSII) and photosystem I (PSI), cyclic electron flow around PSI, and state transitions. The sequence is that of Cytochrome f from Prochlorococcus marinus (strain MIT 9313).